A 304-amino-acid polypeptide reads, in one-letter code: Murein tetrapeptide carboxypeptidase (304 aa).

S106 (nucleophile) is an active-site residue. Catalysis depends on charge relay system residues E200 and H270.

It belongs to the peptidase S66 family.

The protein resides in the cytoplasm. The catalysed reaction is N-acetyl-D-glucosaminyl-N-acetylmuramoyl-L-alanyl-meso-2,6-diaminoheptanedioyl-D-alanine + H2O = N-acetyl-D-glucosaminyl-N-acetylmuramoyl-L-alanyl-meso-2,6-diaminoheptanedioate + D-alanine. It functions in the pathway cell wall biogenesis; peptidoglycan recycling. Functionally, releases the terminal D-alanine residue from the cytoplasmic tetrapeptide recycling product L-Ala-gamma-D-Glu-meso-Dap-D-Ala. Can also cleave D-Ala from murein derivatives containing the tetrapeptide, i.e. MurNAc-tetrapeptide, UDP-MurNAc-tetrapeptide, GlcNAc-MurNAc-tetrapeptide, and GlcNAc-anhMurNAc-tetrapeptide. Does not act on murein sacculi or cross-linked muropeptides. The tripeptides produced by the LcdA reaction can then be reused as peptidoglycan building blocks; LcdA is thereby involved in murein recycling. This chain is Murein tetrapeptide carboxypeptidase (ldcA), found in Escherichia coli O157:H7.